A 187-amino-acid chain; its full sequence is MCAARQILLLLLAFLAYALDSAAAYGTAETLCGGELVDTLQFVCGDRGFYFSRPVGRNNRRINRGIVEECCFRSCDLALLETYCAKSVKSERDLSATSLAGLPALNKESFQKPSHAKYSKYNVWQKKSSQRLQREVPGILRARRYRWQAEGLQAAEEARAMHRPLISLPSQRPPAPRASPEATGPQE.

The first 23 residues, 1–23, serve as a signal peptide directing secretion; that stretch reads MCAARQILLLLLAFLAYALDSAA. Positions 25 to 51 are b; sequence YGTAETLCGGELVDTLQFVCGDRGFYF. 3 cysteine pairs are disulfide-bonded: Cys-32–Cys-71, Cys-44–Cys-84, and Cys-70–Cys-75. The tract at residues 52-64 is c; that stretch reads SRPVGRNNRRINR. The segment at 64-85 is a; the sequence is RGIVEECCFRSCDLALLETYCA. Residues 86–91 are d; it reads KSVKSE. The propeptide at 92–187 is e peptide; sequence RDLSATSLAG…ASPEATGPQE (96 aa). The disordered stretch occupies residues 162-187; it reads HRPLISLPSQRPPAPRASPEATGPQE.

The protein belongs to the insulin family.

It is found in the secreted. The insulin-like growth factors, isolated from plasma, are structurally and functionally related to insulin but have a much higher growth-promoting activity. Acts as a ligand for integrin which is required for IGF2 signaling. This Gallus gallus (Chicken) protein is Insulin-like growth factor 2.